The primary structure comprises 189 residues: Bilin-binding protein (189 aa).

The N-terminal stretch at 1–15 is a signal peptide; the sequence is MQYLIVLALVAAASA. Cystine bridges form between cysteine 23-cysteine 130 and cysteine 57-cysteine 185.

Belongs to the calycin superfamily. Lipocalin family. As to quaternary structure, homotetramer. In terms of tissue distribution, hemolymph.

The protein resides in the secreted. In terms of biological role, this protein binds the blue pigments bilins. This Pieris brassicae (White butterfly) protein is Bilin-binding protein.